Here is a 315-residue protein sequence, read N- to C-terminus: 7,8-didemethyl-8-hydroxy-5-deazariboflavin synthase (315 aa).

In terms of domain architecture, Radical SAM core spans 6-237 (ITYSPAFTLV…EDITIQIPAN (232 aa)). [4Fe-4S] cluster contacts are provided by Cys-20, Cys-24, and Cys-27.

It belongs to the radical SAM superfamily. CofG family. Consists of two subunits, CofG and CofH. It depends on [4Fe-4S] cluster as a cofactor.

The enzyme catalyses 5-amino-5-(4-hydroxybenzyl)-6-(D-ribitylimino)-5,6-dihydrouracil + S-adenosyl-L-methionine = 7,8-didemethyl-8-hydroxy-5-deazariboflavin + 5'-deoxyadenosine + L-methionine + NH4(+) + H(+). Its pathway is cofactor biosynthesis; coenzyme F0 biosynthesis. Its function is as follows. Catalyzes the radical-mediated synthesis of 7,8-didemethyl-8-hydroxy-5-deazariboflavin from 5-amino-5-(4-hydroxybenzyl)-6-(D-ribitylimino)-5,6-dihydrouracil. The chain is 7,8-didemethyl-8-hydroxy-5-deazariboflavin synthase from Thermosynechococcus vestitus (strain NIES-2133 / IAM M-273 / BP-1).